We begin with the raw amino-acid sequence, 214 residues long: Endosomal/vacuolar adapter protein YPT35 (214 aa).

The tract at residues 1–63 (MNDKISFLPP…ATITRTRPRR (63 aa)) is disordered. A PxP motif is present at residues 5-15 (ISFLPPEPIQL). Residues 16–31 (LDEDSTEPELDIDSQQ) are compositionally biased toward acidic residues. Residues 38 to 58 (SASNSNDSTSHSNDCGATITR) are compositionally biased toward low complexity. S65 and S66 each carry phosphoserine. Residues 73 to 213 (FQKAHVSDCT…IQFLEPSKRV (141 aa)) enclose the PX domain.

This sequence belongs to the YPT35 family. As to quaternary structure, interacts with RBD2, YIF1, YIP1 and YIP4.

It localises to the endosome membrane. The protein localises to the vacuole membrane. In terms of biological role, recruits the lipid transfer protein VPS13 to endosomal and vacuolar membranes. The sequence is that of Endosomal/vacuolar adapter protein YPT35 (YPT35) from Saccharomyces cerevisiae (strain YJM789) (Baker's yeast).